A 467-amino-acid polypeptide reads, in one-letter code: ATP synthase subunit beta (467 aa).

150–157 (GGAGVGKT) contributes to the ATP binding site.

The protein belongs to the ATPase alpha/beta chains family. F-type ATPases have 2 components, CF(1) - the catalytic core - and CF(0) - the membrane proton channel. CF(1) has five subunits: alpha(3), beta(3), gamma(1), delta(1), epsilon(1). CF(0) has three main subunits: a(1), b(2) and c(9-12). The alpha and beta chains form an alternating ring which encloses part of the gamma chain. CF(1) is attached to CF(0) by a central stalk formed by the gamma and epsilon chains, while a peripheral stalk is formed by the delta and b chains.

The protein resides in the cell inner membrane. The enzyme catalyses ATP + H2O + 4 H(+)(in) = ADP + phosphate + 5 H(+)(out). Produces ATP from ADP in the presence of a proton gradient across the membrane. The catalytic sites are hosted primarily by the beta subunits. The protein is ATP synthase subunit beta of Vibrio parahaemolyticus serotype O3:K6 (strain RIMD 2210633).